A 171-amino-acid chain; its full sequence is AN1-type zinc finger protein 2A (171 aa).

2 consecutive AN1-type zinc fingers follow at residues 4–52 and 94–142; these read PDLG…KKDV and KVFT…SSVS. Residues Cys-10, Cys-15, Cys-25, Cys-28, Cys-33, His-36, His-42, Cys-44, Cys-100, Cys-105, Cys-115, Cys-118, Cys-123, His-126, His-132, and Cys-134 each contribute to the Zn(2+) site. Residues 135 to 171 form a disordered region; that stretch reads QAGSSSVSRGRSSASRAAEQKPSGVSWLAQRLRRTVK. A compositionally biased stretch (low complexity) spans 136-151; the sequence is AGSSSVSRGRSSASRA.

The protein localises to the cytoplasm. It is found in the nucleus. The sequence is that of AN1-type zinc finger protein 2A (Zfand2a) from Rattus norvegicus (Rat).